A 441-amino-acid polypeptide reads, in one-letter code: Histidinol dehydrogenase (441 aa).

NAD(+)-binding residues include tyrosine 136, glutamine 197, and asparagine 220. Positions 243, 265, and 268 each coordinate substrate. Residues glutamine 265 and histidine 268 each coordinate Zn(2+). Residues glutamate 333 and histidine 334 each act as proton acceptor in the active site. 4 residues coordinate substrate: histidine 334, aspartate 367, glutamate 421, and histidine 426. Zn(2+) is bound at residue aspartate 367. Residue histidine 426 coordinates Zn(2+).

The protein belongs to the histidinol dehydrogenase family. The cofactor is Zn(2+).

The catalysed reaction is L-histidinol + 2 NAD(+) + H2O = L-histidine + 2 NADH + 3 H(+). The protein operates within amino-acid biosynthesis; L-histidine biosynthesis; L-histidine from 5-phospho-alpha-D-ribose 1-diphosphate: step 9/9. In terms of biological role, catalyzes the sequential NAD-dependent oxidations of L-histidinol to L-histidinaldehyde and then to L-histidine. In Pseudomonas fluorescens (strain Pf0-1), this protein is Histidinol dehydrogenase.